Consider the following 331-residue polypeptide: UPF0194 membrane protein YbhG (331 aa).

Positions 1–19 are cleaved as a signal peptide; the sequence is MKKPVVIGLAIAAIVAVIA. A coiled-coil region spans residues 107–208; sequence EEIAQAAAAV…LDLQDTTLIA (102 aa).

Belongs to the UPF0194 family.

Its subcellular location is the periplasm. The chain is UPF0194 membrane protein YbhG from Salmonella paratyphi A (strain ATCC 9150 / SARB42).